The sequence spans 285 residues: Diphthine methyl ester synthase (285 aa).

Residues leucine 9, aspartate 84, glycine 87, 112-113, and leucine 163 contribute to the S-adenosyl-L-methionine site; that span reads SI. The residue at position 171 (serine 171) is a Phosphoserine. 2 residues coordinate S-adenosyl-L-methionine: valine 225 and histidine 250.

The protein belongs to the diphthine synthase family.

It catalyses the reaction 2-[(3S)-amino-3-carboxypropyl]-L-histidyl-[translation elongation factor 2] + 4 S-adenosyl-L-methionine = diphthine methyl ester-[translation elongation factor 2] + 4 S-adenosyl-L-homocysteine + 3 H(+). The protein operates within protein modification; peptidyl-diphthamide biosynthesis. Its function is as follows. S-adenosyl-L-methionine-dependent methyltransferase that catalyzes four methylations of the modified target histidine residue in translation elongation factor 2 (EF-2), to form an intermediate called diphthine methyl ester. The four successive methylation reactions represent the second step of diphthamide biosynthesis. This Bos taurus (Bovine) protein is Diphthine methyl ester synthase (DPH5).